We begin with the raw amino-acid sequence, 552 residues long: Protein TRM32 (552 aa).

A disordered region spans residues Thr295–Leu379. Residues Val331–Leu351 show a composition bias toward basic and acidic residues. Positions Asp352–Lys371 are enriched in polar residues.

The protein is Protein TRM32 (TRM32) of Arabidopsis thaliana (Mouse-ear cress).